Here is a 363-residue protein sequence, read N- to C-terminus: 3-dehydroquinate synthase (363 aa).

NAD(+)-binding positions include 71-76 (DGEQYK), 105-109 (GVIGD), 129-130 (TT), lysine 142, lysine 151, and 169-172 (CLKT). Zn(2+) is bound by residues glutamate 184, histidine 247, and histidine 264.

This sequence belongs to the sugar phosphate cyclases superfamily. Dehydroquinate synthase family. The cofactor is NAD(+). Co(2+) is required as a cofactor. It depends on Zn(2+) as a cofactor.

Its subcellular location is the cytoplasm. The catalysed reaction is 7-phospho-2-dehydro-3-deoxy-D-arabino-heptonate = 3-dehydroquinate + phosphate. Its pathway is metabolic intermediate biosynthesis; chorismate biosynthesis; chorismate from D-erythrose 4-phosphate and phosphoenolpyruvate: step 2/7. Catalyzes the conversion of 3-deoxy-D-arabino-heptulosonate 7-phosphate (DAHP) to dehydroquinate (DHQ). The chain is 3-dehydroquinate synthase from Vibrio vulnificus (strain CMCP6).